We begin with the raw amino-acid sequence, 285 residues long: VQ motif-containing protein 20 (285 aa).

A compositionally biased stretch (basic and acidic residues) spans 1 to 10 (MSSTYKDNHP). The tract at residues 1–68 (MSSTYKDNHP…PSPSSFSSAA (68 aa)) is disordered. Residues 11-23 (YHHHPHHHHHHPK) show a composition bias toward basic residues. The VQ signature appears at 91–100 (FMALVQKLTG). The segment at 195 to 218 (YSAVAIPPQPPPHPPPPPPPPSMY) is disordered. Residues 201–216 (PPQPPPHPPPPPPPPS) are compositionally biased toward pro residues.

The protein localises to the nucleus. Its function is as follows. May function as negative regulator of plant defense. The chain is VQ motif-containing protein 20 from Arabidopsis thaliana (Mouse-ear cress).